The sequence spans 485 residues: Aspartyl/glutamyl-tRNA(Asn/Gln) amidotransferase subunit B (485 aa).

It belongs to the GatB/GatE family. GatB subfamily. Heterotrimer of A, B and C subunits.

The enzyme catalyses L-glutamyl-tRNA(Gln) + L-glutamine + ATP + H2O = L-glutaminyl-tRNA(Gln) + L-glutamate + ADP + phosphate + H(+). It carries out the reaction L-aspartyl-tRNA(Asn) + L-glutamine + ATP + H2O = L-asparaginyl-tRNA(Asn) + L-glutamate + ADP + phosphate + 2 H(+). Allows the formation of correctly charged Asn-tRNA(Asn) or Gln-tRNA(Gln) through the transamidation of misacylated Asp-tRNA(Asn) or Glu-tRNA(Gln) in organisms which lack either or both of asparaginyl-tRNA or glutaminyl-tRNA synthetases. The reaction takes place in the presence of glutamine and ATP through an activated phospho-Asp-tRNA(Asn) or phospho-Glu-tRNA(Gln). The sequence is that of Aspartyl/glutamyl-tRNA(Asn/Gln) amidotransferase subunit B from Borrelia hermsii (strain HS1 / DAH).